A 323-amino-acid polypeptide reads, in one-letter code: Ubiquinone biosynthesis protein COQ4, mitochondrial (323 aa).

A mitochondrion-targeting transit peptide spans 1 to 29 (MLKSTVSNTRIKCCRIDQRRNYLFTALAS). Positions 205, 206, 209, and 221 each coordinate Zn(2+).

This sequence belongs to the COQ4 family. In terms of assembly, component of a multi-subunit COQ enzyme complex, composed of at least COQ3, COQ4, COQ5, COQ6, COQ7 and COQ9. Zn(2+) is required as a cofactor.

The protein resides in the mitochondrion inner membrane. It carries out the reaction a 4-hydroxy-3-methoxy-5-(all-trans-polyprenyl)benzoate + H(+) = a 2-methoxy-6-(all-trans-polyprenyl)phenol + CO2. Its pathway is cofactor biosynthesis; ubiquinone biosynthesis. Its function is as follows. Lyase that catalyzes the C1-decarboxylation of 4-hydroxy-3-methoxy-5-(all-trans-polyprenyl)benzoic acid into 2-methoxy-6-(all-trans-polyprenyl)phenol during ubiquinone biosynthesis. The sequence is that of Ubiquinone biosynthesis protein COQ4, mitochondrial from Candida dubliniensis (strain CD36 / ATCC MYA-646 / CBS 7987 / NCPF 3949 / NRRL Y-17841) (Yeast).